The sequence spans 177 residues: Peptide methionine sulfoxide reductase MsrA (177 aa).

Residue Cys10 is part of the active site.

It belongs to the MsrA Met sulfoxide reductase family.

The catalysed reaction is L-methionyl-[protein] + [thioredoxin]-disulfide + H2O = L-methionyl-(S)-S-oxide-[protein] + [thioredoxin]-dithiol. The enzyme catalyses [thioredoxin]-disulfide + L-methionine + H2O = L-methionine (S)-S-oxide + [thioredoxin]-dithiol. Has an important function as a repair enzyme for proteins that have been inactivated by oxidation. Catalyzes the reversible oxidation-reduction of methionine sulfoxide in proteins to methionine. The polypeptide is Peptide methionine sulfoxide reductase MsrA (Saccharolobus solfataricus (strain ATCC 35092 / DSM 1617 / JCM 11322 / P2) (Sulfolobus solfataricus)).